The sequence spans 189 residues: Lipid A acyltransferase PagP (189 aa).

The first 23 residues, 1 to 23 (MKLKSVLYLLMLLNCLGLKSAHA), serve as a signal peptide directing secretion. Catalysis depends on residues H61, D104, and S105.

Belongs to the lipid A palmitoyltransferase family. In terms of assembly, homodimer.

The protein resides in the cell outer membrane. The catalysed reaction is a lipid A + a 1,2-diacyl-sn-glycero-3-phosphocholine = a hepta-acyl lipid A + a 2-acyl-sn-glycero-3-phosphocholine. The enzyme catalyses a lipid IVA + a 1,2-diacyl-sn-glycero-3-phosphocholine = a lipid IVB + a 2-acyl-sn-glycero-3-phosphocholine. It carries out the reaction a lipid IIA + a 1,2-diacyl-sn-glycero-3-phosphocholine = a lipid IIB + a 2-acyl-sn-glycero-3-phosphocholine. Its function is as follows. Transfers a fatty acid residue from the sn-1 position of a phospholipid to the N-linked hydroxyfatty acid chain on the proximal unit of lipid A or its precursors. The chain is Lipid A acyltransferase PagP from Erwinia amylovora (strain ATCC 49946 / CCPPB 0273 / Ea273 / 27-3).